The following is a 57-amino-acid chain: MAGDFIRVHCDDCENEQVLFGKAANTVNCAVCGSTLATPTGGEADLHGDVVDVVESR.

Residues cysteine 10, cysteine 13, cysteine 29, and cysteine 32 each coordinate Zn(2+). A C4-type zinc finger spans residues 10-32 (CDDCENEQVLFGKAANTVNCAVC).

The protein belongs to the eukaryotic ribosomal protein eS27 family. In terms of assembly, part of the 30S ribosomal subunit. The cofactor is Zn(2+).

This chain is Small ribosomal subunit protein eS27, found in Natronomonas pharaonis (strain ATCC 35678 / DSM 2160 / CIP 103997 / JCM 8858 / NBRC 14720 / NCIMB 2260 / Gabara) (Halobacterium pharaonis).